Consider the following 212-residue polypeptide: Probable nicotinate-nucleotide adenylyltransferase (212 aa).

The protein belongs to the NadD family.

It catalyses the reaction nicotinate beta-D-ribonucleotide + ATP + H(+) = deamido-NAD(+) + diphosphate. Its pathway is cofactor biosynthesis; NAD(+) biosynthesis; deamido-NAD(+) from nicotinate D-ribonucleotide: step 1/1. Functionally, catalyzes the reversible adenylation of nicotinate mononucleotide (NaMN) to nicotinic acid adenine dinucleotide (NaAD). In Shewanella sp. (strain MR-4), this protein is Probable nicotinate-nucleotide adenylyltransferase.